Here is a 474-residue protein sequence, read N- to C-terminus: 3-isopropylmalate dehydratase large subunit (474 aa).

[4Fe-4S] cluster is bound by residues Cys355, Cys415, and Cys418.

The protein belongs to the aconitase/IPM isomerase family. LeuC type 1 subfamily. As to quaternary structure, heterodimer of LeuC and LeuD. Requires [4Fe-4S] cluster as cofactor.

The catalysed reaction is (2R,3S)-3-isopropylmalate = (2S)-2-isopropylmalate. It functions in the pathway amino-acid biosynthesis; L-leucine biosynthesis; L-leucine from 3-methyl-2-oxobutanoate: step 2/4. Its function is as follows. Catalyzes the isomerization between 2-isopropylmalate and 3-isopropylmalate, via the formation of 2-isopropylmaleate. This chain is 3-isopropylmalate dehydratase large subunit, found in Shewanella putrefaciens (strain CN-32 / ATCC BAA-453).